The following is a 512-amino-acid chain: Maturase K (512 aa).

It belongs to the intron maturase 2 family. MatK subfamily.

The protein resides in the plastid. It is found in the chloroplast. In terms of biological role, usually encoded in the trnK tRNA gene intron. Probably assists in splicing its own and other chloroplast group II introns. The polypeptide is Maturase K (Oenothera argillicola (Appalachian evening primrose)).